The following is a 307-amino-acid chain: Aspartate carbamoyltransferase catalytic subunit (307 aa).

The carbamoyl phosphate site is built by R51 and T52. K80 serves as a coordination point for L-aspartate. The carbamoyl phosphate site is built by R101, H129, and Q132. The L-aspartate site is built by R162 and R225. Carbamoyl phosphate contacts are provided by L264 and P265.

It belongs to the aspartate/ornithine carbamoyltransferase superfamily. ATCase family. In terms of assembly, heterododecamer (2C3:3R2) of six catalytic PyrB chains organized as two trimers (C3), and six regulatory PyrI chains organized as three dimers (R2).

It carries out the reaction carbamoyl phosphate + L-aspartate = N-carbamoyl-L-aspartate + phosphate + H(+). Its pathway is pyrimidine metabolism; UMP biosynthesis via de novo pathway; (S)-dihydroorotate from bicarbonate: step 2/3. Catalyzes the condensation of carbamoyl phosphate and aspartate to form carbamoyl aspartate and inorganic phosphate, the committed step in the de novo pyrimidine nucleotide biosynthesis pathway. In Lachnoclostridium phytofermentans (strain ATCC 700394 / DSM 18823 / ISDg) (Clostridium phytofermentans), this protein is Aspartate carbamoyltransferase catalytic subunit.